A 137-amino-acid chain; its full sequence is Cellular retinoic acid-binding protein 1 (137 aa).

A Nuclear localization signal motif is present at residues 21–31 (KALGVNAMLRK). 132 to 134 (RIY) lines the all-trans-retinoate pocket.

Belongs to the calycin superfamily. Fatty-acid binding protein (FABP) family.

The protein localises to the cytoplasm. Cytosolic CRABPs may regulate the access of retinoic acid to the nuclear retinoic acid receptors. The polypeptide is Cellular retinoic acid-binding protein 1 (CRABP1) (Homo sapiens (Human)).